The primary structure comprises 364 residues: Adenosine 3'-phospho 5'-phosphosulfate transporter 2 (364 aa).

The next 10 membrane-spanning stretches (helical) occupy residues 39-59 (WLQFVLLSLAIFILYIGYGYM), 74-94 (WTLTLIQFLIYSGCGYTECII), 106-126 (IYGVIAFFTVATMGLSNASVG), 131-151 (PTQVIFKCCKLIPVLIGGILI), 157-177 (GWIDIGAAMLMSLGIIMFTLA), 187-206 (SRGYIMICGALLADAVIGNI), 231-251 (VFIFAFVVLSGEVFSAIPFFL), 257-277 (TFGYALILSCLGYLGVNVVLT), 281-301 (VFGALVAVTVTTLRKALTIIL), and 310-330 (FTIEYVYAGSVVMLAIYLNLY).

Belongs to the nucleotide-sugar transporter family. SLC35B subfamily.

The protein resides in the golgi apparatus membrane. In terms of biological role, mediates the transport of adenosine 3'-phospho 5'-phosphosulfate (PAPS), from cytosol into Golgi. PAPS is a universal sulfuryl donor for sulfation events that take place in the Golgi. The sequence is that of Adenosine 3'-phospho 5'-phosphosulfate transporter 2 (pst-2) from Caenorhabditis elegans.